Here is a 216-residue protein sequence, read N- to C-terminus: Calcium-binding protein 2 (216 aa).

The interval 1 to 41 is disordered; it reads MGNCAKTPWHRGSKERWQWPGSPLGGSRPSPGPRTEEQEGT. Residue Gly-2 is the site of N-myristoyl glycine attachment. The segment covering 20 to 29 has biased composition (low complexity); it reads PGSPLGGSRP. 4 consecutive EF-hand domains span residues 74–109, 125–142, 148–183, and 185–216; these read EEIE…LGYM, GKVD…KLLA, IGVR…LLGE, and LSQR…MMSR. The Ca(2+) site is built by Asp-87, Asp-89, Asp-91, Tyr-93, and Glu-98. Asp-161, Asn-163, Asp-165, Cys-167, Glu-172, Asp-198, Asn-200, Asp-202, and Glu-209 together coordinate Ca(2+).

In terms of tissue distribution, expressed in the inner hair cells (IHCs), outer hair cells,(OHCs) and vestibular hair cells within the ear and in the retina (at protein level). Expressed in the retinal cone type 6 ON-bipolar cells and type 1 OFF-bipolar cells (at protein level). Expressed in the organ of Corti and spiral ganglion neurons in the cochlea (at protein level).

It is found in the cytoplasm. It localises to the perinuclear region. The protein resides in the cell membrane. Its subcellular location is the golgi apparatus. In terms of biological role, required for sound encoding at inner hair cells (IHCs) synapses, likely via inhibition of the inactivation of voltage-gated calcium channel of type 1.3 (Cav1.3) in the IHCs. Required for the normal transfer of light signals through the retina. In Mus musculus (Mouse), this protein is Calcium-binding protein 2 (Cabp2).